Reading from the N-terminus, the 334-residue chain is MKETIAYLGMGMWGFSLANLLANNGHRVVGWARNPALIEQLSVQRRHPAAPHISIPQNLSFTSHMEEALDGATMIVEGVTSAGMRPVLTQLKALTELRVPLVITSKGIEQNTGLLLSEIALEIFGRPAAQHLGYLSGPSIASEVLRGCPCSVVISAYNPDTLKQIHRAFLTPTFRVYPNSDLKGVALGGALKNVIAIACGISDGFRFGDNAKSGLVTRGLHEIRKFATIMGCRPDTLNGLAGLGDLCTTCFSAFSRNTLFGKLLAEGLTPEQAKTKIGMVVEGVYTALSAHQIATHHRIDMPITTSVYRVLYENLDIQEGIAQLLQRDTKEEYL.

Residues W13, R33, and K106 each contribute to the NADPH site. K106, G137, and S139 together coordinate sn-glycerol 3-phosphate. A141 contacts NADPH. Sn-glycerol 3-phosphate contacts are provided by K192, D245, S255, R256, and N257. The active-site Proton acceptor is the K192. R256 is an NADPH binding site. V280 and E282 together coordinate NADPH.

The protein belongs to the NAD-dependent glycerol-3-phosphate dehydrogenase family.

The protein localises to the cytoplasm. The catalysed reaction is sn-glycerol 3-phosphate + NAD(+) = dihydroxyacetone phosphate + NADH + H(+). The enzyme catalyses sn-glycerol 3-phosphate + NADP(+) = dihydroxyacetone phosphate + NADPH + H(+). The protein operates within membrane lipid metabolism; glycerophospholipid metabolism. In terms of biological role, catalyzes the reduction of the glycolytic intermediate dihydroxyacetone phosphate (DHAP) to sn-glycerol 3-phosphate (G3P), the key precursor for phospholipid synthesis. The sequence is that of Glycerol-3-phosphate dehydrogenase [NAD(P)+] from Chlamydia trachomatis serovar L2b (strain UCH-1/proctitis).